The primary structure comprises 142 residues: Immunoglobulin omega chain (142 aa).

An N-terminal signal peptide occupies residues 1-19 (MAWTSVLLMLLAHLTGCGP). Positions 20-41 (QPMVHQPPSASSSLGATIRLSC) are framework-1. The cysteines at positions 41 and 115 are disulfide-linked. A complementarity-determining-1 region spans residues 42-56 (TLSNDHNIGIYSIYW). The segment at 57–70 (YQQRPGHPPRFLLR) is framework-2. Residues 71–81 (YFSHSDKHQGP) are complementarity-determining-2. The segment at 82-115 (DIPPRFSGSKDTARNLGYLSISELQPEDEAVYYC) is framework-3.

The protein belongs to the immunoglobulin superfamily. Only expressed by pre-B-cells.

In terms of biological role, associates with the Ig-mu chain to form a molecular complex that is expressed on the surface of pre-B-cells. This complex presumably regulates Ig gene rearrangements in the early steps of B-cell differentiation. In Mus musculus (Mouse), this protein is Immunoglobulin omega chain.